A 183-amino-acid polypeptide reads, in one-letter code: ATP synthase subunit delta (183 aa).

It belongs to the ATPase delta chain family. As to quaternary structure, F-type ATPases have 2 components, F(1) - the catalytic core - and F(0) - the membrane proton channel. F(1) has five subunits: alpha(3), beta(3), gamma(1), delta(1), epsilon(1). F(0) has three main subunits: a(1), b(2) and c(10-14). The alpha and beta chains form an alternating ring which encloses part of the gamma chain. F(1) is attached to F(0) by a central stalk formed by the gamma and epsilon chains, while a peripheral stalk is formed by the delta and b chains.

It is found in the cell inner membrane. F(1)F(0) ATP synthase produces ATP from ADP in the presence of a proton or sodium gradient. F-type ATPases consist of two structural domains, F(1) containing the extramembraneous catalytic core and F(0) containing the membrane proton channel, linked together by a central stalk and a peripheral stalk. During catalysis, ATP synthesis in the catalytic domain of F(1) is coupled via a rotary mechanism of the central stalk subunits to proton translocation. Functionally, this protein is part of the stalk that links CF(0) to CF(1). It either transmits conformational changes from CF(0) to CF(1) or is implicated in proton conduction. This Ruthia magnifica subsp. Calyptogena magnifica protein is ATP synthase subunit delta.